Reading from the N-terminus, the 249-residue chain is MRTPLIAGNWKMNGSSALVDAFGQAFADADLPESVEVVVHPPFPYLDAARRALAGGPVKLGAQTLNPLHAGARTGEVSGRMLKEFDVEYVLVGHSERRELYRESDDDVYDRLLAALNADLRPILCVGETLEARDAGRTRDVVLRQVGHALAPLEPAQRARVTIAYEPVWAIGTGRTATPEQAQEVMAAIREYQAGFDPALAQSMRLIYGGSMNAANAAELLAQPDIDGGLVGGASLKVDDFLAICHSAR.

Substrate is bound at residue 9 to 11 (NWK). The active-site Electrophile is the H94. E166 (proton acceptor) is an active-site residue. Substrate is bound by residues G172, S211, and 232–233 (GG).

This sequence belongs to the triosephosphate isomerase family. In terms of assembly, homodimer.

It localises to the cytoplasm. The enzyme catalyses D-glyceraldehyde 3-phosphate = dihydroxyacetone phosphate. It participates in carbohydrate biosynthesis; gluconeogenesis. It functions in the pathway carbohydrate degradation; glycolysis; D-glyceraldehyde 3-phosphate from glycerone phosphate: step 1/1. Its function is as follows. Involved in the gluconeogenesis. Catalyzes stereospecifically the conversion of dihydroxyacetone phosphate (DHAP) to D-glyceraldehyde-3-phosphate (G3P). The polypeptide is Triosephosphate isomerase (Chromohalobacter salexigens (strain ATCC BAA-138 / DSM 3043 / CIP 106854 / NCIMB 13768 / 1H11)).